We begin with the raw amino-acid sequence, 859 residues long: Suppressor protein MPT5 (859 aa).

Residues 85 to 108 (MNNTSTSNSANSFSPNPNAASNST) form a disordered region. Residues 86 to 108 (NNTSTSNSANSFSPNPNAASNST) show a composition bias toward low complexity. The 409-residue stretch at 188-596 (DNSSFGLSSS…KIKLKVKAYA (409 aa)) folds into the PUM-HD domain. Pumilio repeat units lie at residues 209-247 (PLRD…LMYE), 248-283 (QIKP…LLIQ), 284-320 (TIYP…LIIK), 325-362 (EFTS…FIID), 363-400 (AIVE…KISV), 401-438 (KIVQ…ELFN), 439-474 (RLSN…FIVN), and 503-539 (DIFT…AYNK). Positions 620–658 (TINNENKNPHNKNSHNHNHNHNHNHAHNNNNNNNQKSHT) are disordered. Basic residues predominate over residues 628–645 (PHNKNSHNHNHNHNHNHA). Residues Ser-662, Ser-834, and Ser-838 each carry the phosphoserine modification.

The protein resides in the cytoplasm. Functionally, RNA-binding protein involved in post-transcriptional regulation. Negatively regulates expression of HO by binding to the 3'-UTR of HO mRNA. Predominantly binds to mRNAs encoding chromatin modifiers and spindle pole body components. Recognizes and binds to 5'-TGTAA[CT]A[AT]TA-3' in the 3'-UTR of target mRNAs. Multicopy suppressor of POP2 mutation. Required for high temperature growth. The chain is Suppressor protein MPT5 (MPT5) from Saccharomyces cerevisiae (strain ATCC 204508 / S288c) (Baker's yeast).